The chain runs to 327 residues: Meiotic coiled-coil protein 6 (327 aa).

Residues 66-188 adopt a coiled-coil conformation; the sequence is DAFERDSTQR…TETKEMNKIK (123 aa). The segment covering 175 to 199 has biased composition (basic and acidic residues); that stretch reads RRMETETKEMNKIKPKNDSESDRFK. Residues 175-234 form a disordered region; it reads RRMETETKEMNKIKPKNDSESDRFKRNSQSLSQQSPLLDVHSPDNSNHRTMLNINNSSPI. Residues 202 to 212 are compositionally biased toward low complexity; it reads SQSLSQQSPLL. Polar residues predominate over residues 217–232; the sequence is PDNSNHRTMLNINNSS. Positions 243 to 297 form a coiled coil; the sequence is NEVKNRISRLQKTFADLENQHHSFQQICQTLRKRLENDSSTTKQRLSKLEEIIRN.

In terms of assembly, interacts with alp4, kms1 and mbo1.

Its subcellular location is the nucleus. The protein resides in the cytoplasm. The protein localises to the cytoskeleton. It is found in the microtubule organizing center. It localises to the spindle pole body. Its function is as follows. Has a role in meiotic nuclear oscillation and recombination. Required to remodel astral microtubules into the 'horsetail' astral array maintaining the 'horsetail' nuclear movement. Promotes homologous paring of chromosomes during this movement. The chain is Meiotic coiled-coil protein 6 (mcp6) from Schizosaccharomyces pombe (strain 972 / ATCC 24843) (Fission yeast).